The sequence spans 141 residues: Hemoglobin subunit mu (141 aa).

The 141-residue stretch at 1–141 (MLSAQERAQI…VAVVLTEKYR (141 aa)) folds into the Globin domain. Positions 58 and 87 each coordinate heme b.

It belongs to the globin family. Expressed in erythroid tissues.

This is Hemoglobin subunit mu (HBM) from Homo sapiens (Human).